We begin with the raw amino-acid sequence, 144 residues long: Translation initiation factor 5A (144 aa).

A Hypusine modification is found at Lys-38.

Belongs to the eIF-5A family.

It localises to the cytoplasm. Functions by promoting the formation of the first peptide bond. The polypeptide is Translation initiation factor 5A (Nanoarchaeum equitans (strain Kin4-M)).